A 455-amino-acid chain; its full sequence is 2-succinylbenzoate--CoA ligase (455 aa).

This sequence belongs to the ATP-dependent AMP-binding enzyme family. MenE subfamily.

The catalysed reaction is 2-succinylbenzoate + ATP + CoA = 2-succinylbenzoyl-CoA + AMP + diphosphate. It functions in the pathway quinol/quinone metabolism; 1,4-dihydroxy-2-naphthoate biosynthesis; 1,4-dihydroxy-2-naphthoate from chorismate: step 5/7. Its pathway is quinol/quinone metabolism; menaquinone biosynthesis. Converts 2-succinylbenzoate (OSB) to 2-succinylbenzoyl-CoA (OSB-CoA). The sequence is that of 2-succinylbenzoate--CoA ligase from Salmonella typhimurium (strain LT2 / SGSC1412 / ATCC 700720).